The primary structure comprises 712 residues: Amino-acid acetyltransferase, mitochondrial (712 aa).

A mitochondrion-targeting transit peptide spans 1–47 (MFVRTCRSSCNAWTNATSTTQAGSLLPPNAHRSVVLTLSLQACSART). A disordered region spans residues 55–99 (FASTTSQSKRQEAEAEEKRQVSPRLGPSAPRSSYPSSAEARQKRD). Positions 63–74 (KRQEAEAEEKRQ) are enriched in basic and acidic residues. Residues 81-93 (PSAPRSSYPSSAE) show a composition bias toward low complexity. Residues 534 to 702 (GVPRLRLTDT…YEDVCRNIAP (169 aa)) form the N-acetyltransferase domain.

Belongs to the acetyltransferase family.

Its subcellular location is the mitochondrion. The enzyme catalyses L-glutamate + acetyl-CoA = N-acetyl-L-glutamate + CoA + H(+). The protein operates within amino-acid biosynthesis; L-arginine biosynthesis; N(2)-acetyl-L-ornithine from L-glutamate: step 1/4. With respect to regulation, inhibited by arginine. N-acetylglutamate synthase involved in arginine biosynthesis. In Neurospora crassa (strain ATCC 24698 / 74-OR23-1A / CBS 708.71 / DSM 1257 / FGSC 987), this protein is Amino-acid acetyltransferase, mitochondrial (arg-14).